A 313-amino-acid polypeptide reads, in one-letter code: Tyrosine recombinase slr0733 (313 aa).

A Core-binding (CB) domain is found at 7-101 (NNLSGLNQNI…AIKSLVNYAR (95 aa)). The Tyr recombinase domain maps to 122-307 (RDTTGVSPTS…RHQHQAQITD (186 aa)). Catalysis depends on residues arginine 162, lysine 188, histidine 258, arginine 261, and histidine 285. The O-(3'-phospho-DNA)-tyrosine intermediate role is filled by tyrosine 294.

It belongs to the 'phage' integrase family.

The protein localises to the cytoplasm. Site-specific tyrosine recombinase, which acts by catalyzing the cutting and rejoining of the recombining DNA molecules. The sequence is that of Tyrosine recombinase slr0733 from Synechocystis sp. (strain ATCC 27184 / PCC 6803 / Kazusa).